Reading from the N-terminus, the 642-residue chain is Chaperone protein DnaK (642 aa).

At T198 the chain carries Phosphothreonine; by autocatalysis. A compositionally biased stretch (basic and acidic residues) spans 578-589; sequence DDKEAIESRMQK. Residues 578 to 642 are disordered; it reads DDKEAIESRM…FEEVKDGDKK (65 aa). Residues 603 to 619 show a composition bias toward low complexity; the sequence is AEQAAQQGGDAGAQAED.

It belongs to the heat shock protein 70 family.

Acts as a chaperone. This chain is Chaperone protein DnaK, found in Hahella chejuensis (strain KCTC 2396).